Consider the following 871-residue polypeptide: Patatin-like phospholipase domain-containing protein CNBE2340 (871 aa).

A disordered region spans residues 20–53; that stretch reads NEDSPLSPRSFSLPPESPQLSTASPIHQRVSRKR. Residues 23 to 33 show a composition bias toward low complexity; sequence SPLSPRSFSLP. A helical membrane pass occupies residues 68 to 88; that stretch reads WPLLFFIFFIIYLEFSAYVIT. One can recognise a PNPLA domain in the interval 243 to 435; it reads LCLSGGASFG…REDIPLGSLH (193 aa). The short motif at 274–278 is the GXSXG element; it reads GTSAG. The Nucleophile role is filled by serine 276. The active-site Proton acceptor is the aspartate 422. Disordered stretches follow at residues 586-707, 720-748, and 760-871; these read ALSH…NFGD, LSSPFRSIRSNTSSSSNNVQSPSSSQRFR, and VSES…QDGA. 2 stretches are compositionally biased toward polar residues: residues 594-606 and 687-706; these read NDPATSLPETNPE and PTHSPIATESPQRNYTSNFG. The span at 721–748 shows a compositional bias: low complexity; the sequence is SSPFRSIRSNTSSSSNNVQSPSSSQRFR. The span at 798-820 shows a compositional bias: basic and acidic residues; the sequence is VESHSDRSEDEMLHSGANVKEEY.

Belongs to the PLPL family.

Its subcellular location is the membrane. Probable lipid hydrolase. This Cryptococcus neoformans var. neoformans serotype D (strain B-3501A) (Filobasidiella neoformans) protein is Patatin-like phospholipase domain-containing protein CNBE2340.